Reading from the N-terminus, the 736-residue chain is Dynamin-1-like protein (736 aa).

Met1 carries the N-acetylmethionine modification. A Dynamin-type G domain is found at Ile22–Pro302. The G1 motif stretch occupies residues Gly32–Ser39. Residue Gly32–Ser40 participates in GTP binding. Positions Val58–Arg60 are G2 motif. The tract at residues Asp146–Gly149 is G3 motif. A G4 motif region spans residues Thr215–Asp218. Residues Thr215–Asp221 and Asn246–Gln249 each bind GTP. The interval Val245–Ser248 is G5 motif. Residues Tyr344–Ile489 are middle domain. The interval Asn448 to Glu685 is interaction with GSK3B. The interval Ala502–Asn569 is b domain. Residues Glu523–Arg590 form a disordered region. The residue at position 529 (Ser529) is a Phosphoserine. Residues Lys532 and Lys535 each participate in a glycyl lysine isopeptide (Lys-Gly) (interchain with G-Cter in SUMO) cross-link. Residues Pro537–Glu554 show a composition bias toward low complexity. Ser548 carries the post-translational modification Phosphoserine. The span at Ala555 to Lys568 shows a compositional bias: basic and acidic residues. Residues Lys558 and Lys568 each participate in a glycyl lysine isopeptide (Lys-Gly) (interchain with G-Cter in SUMO) cross-link. O-linked (GlcNAc) threonine glycans are attached at residues Thr585 and Thr586. Residue Lys594 forms a Glycyl lysine isopeptide (Lys-Gly) (interchain with G-Cter in SUMO) linkage. Lys597 is subject to N6-acetyllysine; alternate. A Glycyl lysine isopeptide (Lys-Gly) (interchain with G-Cter in SUMO); alternate cross-link involves residue Lys597. Lys606 participates in a covalent cross-link: Glycyl lysine isopeptide (Lys-Gly) (interchain with G-Cter in SUMO). Phosphoserine is present on Ser607. A Glycyl lysine isopeptide (Lys-Gly) (interchain with G-Cter in SUMO) cross-link involves residue Lys608. A Phosphoserine; by CDK1 and PINK1 modification is found at Ser616. Phosphoserine; by CAMK1 and PKA is present on Ser637. Cys644 is subject to S-nitrosocysteine. Residues Cys644 to Leu735 form the GED domain. The interval Tyr654–Lys668 is important for homodimerization.

The protein belongs to the TRAFAC class dynamin-like GTPase superfamily. Dynamin/Fzo/YdjA family. In terms of assembly, homotetramer; dimerizes through the N-terminal GTP-middle region of one molecule binding to the GED domain of another DNM1L molecule. Oligomerizes in a GTP-dependent manner to form membrane-associated tubules with a spiral pattern. Interacts with GSK3B and MARCHF5. Interacts (via the GTPase and B domains) with UBE2I; the interaction promotes sumoylation of DNM1L, mainly in its B domain. Interacts with PPP3CA; the interaction dephosphorylates DNM1L and regulates its transition to mitochondria. Interacts with BCL2L1 isoform BCL-X(L) and CLTA; DNM1L and BCL2L1 isoform BCL-X(L) may form a complex in synaptic vesicles that also contains clathrin and MFF. Interacts with MFF; the interaction is inhibited by C11orf65/MFI. Interacts with FIS1; may form part of a larger protein complex at the endoplasmic reticulum-mitochondrial interface during mitochondrial fission. Interacts with CANX. Interacts with BCAP31. Interacts with MIEF2 and MIEF1; GTP-dependent, regulates GTP hydrolysis and DNM1L oligomerization. Interacts with PGAM5; this interaction leads to dephosphorylation at Ser-656 and activation of GTPase activity and eventually to mitochondria fragmentation. Interacts with RALBP1; during mitosis, recruits DNM1L to the mitochondrion and mediates its activation by the mitotic kinase cyclin B-CDK1. Interacts with FUNDC1; this interaction recruits DNM1L/DRP1 at ER-mitochondria contact sites. In terms of processing, phosphorylation/dephosphorylation events on two sites near the GED domain regulate mitochondrial fission. Phosphorylation on Ser-637 by CAMK1 and PKA inhibits the GTPase activity, leading to a defect in mitochondrial fission promoting mitochondrial elongation. Dephosphorylated on this site by PPP3CA which promotes mitochondrial fission. Phosphorylation on Ser-616 by CDK1 and PINK1 activates the GTPase activity and promotes mitochondrial fission. Phosphorylated in a circadian manner at Ser-637. Dephosphorylated by PGAM5. Post-translationally, sumoylated on various lysine residues within the B domain, probably by MUL1. Sumoylation positively regulates mitochondrial fission. Desumoylated by SENP5 during G2/M transition of mitosis. Appears to be linked to its catalytic activity. S-nitrosylation increases DNM1L dimerization, mitochondrial fission and causes neuronal damage. In terms of processing, ubiquitination by MARCHF5 affects mitochondrial morphology. Post-translationally, O-GlcNAcylation augments the level of the GTP-bound active form of DNM1L and induces translocation from the cytoplasm to mitochondria in cardiomyocytes. It also decreases phosphorylation at Ser-637. As to expression, ubiquitously expressed with highest levels found in skeletal muscles, heart, kidney and brain. Isoform 1 is brain-specific. Isoform 2 and isoform 3 are predominantly expressed in testis and skeletal muscles respectively. Isoform 4 is weakly expressed in brain, heart and kidney. Isoform 5 is dominantly expressed in liver, heart and kidney. Isoform 6 is expressed in neurons.

Its subcellular location is the cytoplasm. The protein localises to the cytosol. The protein resides in the golgi apparatus. It localises to the endomembrane system. It is found in the mitochondrion outer membrane. Its subcellular location is the peroxisome. The protein localises to the membrane. The protein resides in the clathrin-coated pit. It localises to the cytoplasmic vesicle. It is found in the secretory vesicle. Its subcellular location is the synaptic vesicle membrane. The enzyme catalyses GTP + H2O = GDP + phosphate + H(+). Its activity is regulated as follows. GTPase activity is increased by binding to phospholipid membranes. In terms of biological role, functions in mitochondrial and peroxisomal division. Mediates membrane fission through oligomerization into membrane-associated tubular structures that wrap around the scission site to constrict and sever the mitochondrial membrane through a GTP hydrolysis-dependent mechanism. The specific recruitment at scission sites is mediated by membrane receptors like MFF, MIEF1 and MIEF2 for mitochondrial membranes. While the recruitment by the membrane receptors is GTP-dependent, the following hydrolysis of GTP induces the dissociation from the receptors and allows DNM1L filaments to curl into closed rings that are probably sufficient to sever a double membrane. Acts downstream of PINK1 to promote mitochondrial fission in a PRKN-dependent manner. Plays an important role in mitochondrial fission during mitosis. Through its function in mitochondrial division, ensures the survival of at least some types of postmitotic neurons, including Purkinje cells, by suppressing oxidative damage. Required for normal brain development, including that of cerebellum. Facilitates developmentally regulated apoptosis during neural tube formation. Required for a normal rate of cytochrome c release and caspase activation during apoptosis; this requirement may depend upon the cell type and the physiological apoptotic cues. Required for formation of endocytic vesicles. Proposed to regulate synaptic vesicle membrane dynamics through association with BCL2L1 isoform Bcl-X(L) which stimulates its GTPase activity in synaptic vesicles; the function may require its recruitment by MFF to clathrin-containing vesicles. Required for programmed necrosis execution. Rhythmic control of its activity following phosphorylation at Ser-637 is essential for the circadian control of mitochondrial ATP production. Its function is as follows. Inhibits peroxisomal division when overexpressed. The protein is Dynamin-1-like protein of Homo sapiens (Human).